A 265-amino-acid polypeptide reads, in one-letter code: NAD kinase 1 (265 aa).

D45 serves as the catalytic Proton acceptor. Residues 45-46 (DG), H50, 122-123 (NE), R148, D150, and A185 each bind NAD(+).

The protein belongs to the NAD kinase family. The cofactor is a divalent metal cation.

It is found in the cytoplasm. It catalyses the reaction NAD(+) + ATP = ADP + NADP(+) + H(+). Functionally, involved in the regulation of the intracellular balance of NAD and NADP, and is a key enzyme in the biosynthesis of NADP. Catalyzes specifically the phosphorylation on 2'-hydroxyl of the adenosine moiety of NAD to yield NADP. The chain is NAD kinase 1 from Halalkalibacterium halodurans (strain ATCC BAA-125 / DSM 18197 / FERM 7344 / JCM 9153 / C-125) (Bacillus halodurans).